A 288-amino-acid polypeptide reads, in one-letter code: Nucleotide-binding protein PM0169 (288 aa).

8–15 (GHSGAGKS) contacts ATP. 56–59 (DIRN) serves as a coordination point for GTP.

Belongs to the RapZ-like family.

Displays ATPase and GTPase activities. The polypeptide is Nucleotide-binding protein PM0169 (Pasteurella multocida (strain Pm70)).